The chain runs to 370 residues: Immunoglobulin superfamily member 5 (370 aa).

A signal peptide spans 1 to 24 (MEGSWRDVLAVLVILAQLTASGSS). Ig-like V-type domains lie at 25 to 125 (YQII…LSVQ) and 128 to 215 (GTLN…KSLT). The Extracellular portion of the chain corresponds to 25–239 (YQIIEGPQNV…EEGPALPTWA (215 aa)). Residues Asn33 and Asn45 are each glycosylated (N-linked (GlcNAc...) asparagine). Cys46 and Cys109 form a disulfide bridge. Asn146, Asn196, and Asn217 each carry an N-linked (GlcNAc...) asparagine glycan. Cys149 and Cys201 are oxidised to a cystine. The chain crosses the membrane as a helical span at residues 240–260 (IILLAVAFSLLLILIIVLIII). The Cytoplasmic portion of the chain corresponds to 261–370 (FCCCCASRRE…PQKVRNVTLV (110 aa)). Residues 284-359 (ANMRTNKADP…THPRVSFDIA (76 aa)) form a disordered region. The span at 289–301 (NKADPETKLKGGK) shows a compositional bias: basic and acidic residues.

The protein belongs to the immunoglobulin superfamily. Interacts with MAGI1 at tight junctions, forms a tripartite complex with NPHS1. Interacts with LNX1 isoform 2 via its PDZ 2 domain, it may also interact with other isoforms containing this domain. Post-translationally, N-glycosylated. In terms of tissue distribution, localized to kidney glomeruli and small intestinal epithelial cells. In kidney glomeruli, it is localized at slit diaphragm. Also found in spermatogonia, gonocytes, hematopoietic stem cells and Sertoli cells.

The protein resides in the apical cell membrane. Its subcellular location is the cell junction. It is found in the tight junction. In terms of biological role, provides, together with MAGI1, an adhesion machinery at tight junctions, which may regulate the permeability of kidney glomerulus and small intestinal epithelial cells. Mediates calcium-independent homophilic cell adhesion. In testis, it may function as a cell adhesion molecule rather than a tight-junction protein. It may participate in the adhesion between spermatogonia-spermatogonia, spermatogonia-Sertoli cells, and Sertoli cells-Sertoli cells. The sequence is that of Immunoglobulin superfamily member 5 (Igsf5) from Mus musculus (Mouse).